The following is a 374-amino-acid chain: Carbamoyl phosphate synthase small chain (374 aa).

A CPSase region spans residues 1-186 (MTEPAILVLE…DRNEWKRAAP (186 aa)). 3 residues coordinate L-glutamine: serine 47, glycine 237, and glycine 239. One can recognise a Glutamine amidotransferase type-1 domain in the interval 189–374 (KVVAYDYGVK…RFITMMAAQS (186 aa)). Catalysis depends on cysteine 265, which acts as the Nucleophile. L-glutamine is bound by residues leucine 266, glutamine 269, asparagine 307, glycine 309, and phenylalanine 310. Active-site residues include histidine 349 and glutamate 351.

It belongs to the CarA family. In terms of assembly, composed of two chains; the small (or glutamine) chain promotes the hydrolysis of glutamine to ammonia, which is used by the large (or ammonia) chain to synthesize carbamoyl phosphate. Tetramer of heterodimers (alpha,beta)4.

The catalysed reaction is hydrogencarbonate + L-glutamine + 2 ATP + H2O = carbamoyl phosphate + L-glutamate + 2 ADP + phosphate + 2 H(+). The enzyme catalyses L-glutamine + H2O = L-glutamate + NH4(+). The protein operates within amino-acid biosynthesis; L-arginine biosynthesis; carbamoyl phosphate from bicarbonate: step 1/1. Its pathway is pyrimidine metabolism; UMP biosynthesis via de novo pathway; (S)-dihydroorotate from bicarbonate: step 1/3. In terms of biological role, small subunit of the glutamine-dependent carbamoyl phosphate synthetase (CPSase). CPSase catalyzes the formation of carbamoyl phosphate from the ammonia moiety of glutamine, carbonate, and phosphate donated by ATP, constituting the first step of 2 biosynthetic pathways, one leading to arginine and/or urea and the other to pyrimidine nucleotides. The small subunit (glutamine amidotransferase) binds and cleaves glutamine to supply the large subunit with the substrate ammonia. In Xylella fastidiosa (strain 9a5c), this protein is Carbamoyl phosphate synthase small chain.